The sequence spans 676 residues: ATP-dependent RNA helicase dbp-9 (676 aa).

Positions 1–97 (MAKRKLNETD…SEKDDADLTF (97 aa)) are disordered. Positions 70–90 (QQLKDEQKQQDEKDEKKQSEK) are enriched in basic and acidic residues. The Q motif signature appears at 95-123 (LTFSDLGLDPRLVQAVAKQSFEKPTLVQR). In terms of domain architecture, Helicase ATP-binding spans 126-304 (IPLALAGQDV…KGFFCRNPTM (179 aa)). Residue 139-146 (AKTGSGKT) coordinates ATP. A DEAD box motif is present at residues 251–254 (DEAD). A Helicase C-terminal domain is found at 317 to 541 (KLTQFYVKCG…PYNFNKDQME (225 aa)). Positions 410–432 (EDEKTEEKKEEQGEKKEGDEKKN) are enriched in basic and acidic residues. Disordered stretches follow at residues 410–444 (EDEK…RRDQ) and 633–676 (FKKQ…RVRK). A compositionally biased stretch (basic residues) spans 642-663 (TRGKKGAKGGKGGHGKYKKGPG).

Belongs to the DEAD box helicase family. DDX56/DBP9 subfamily.

It localises to the nucleus. It is found in the nucleolus. The enzyme catalyses ATP + H2O = ADP + phosphate + H(+). In terms of biological role, ATP-binding RNA helicase involved in the biogenesis of 60S ribosomal subunits and is required for the normal formation of 25S and 5.8S rRNAs. This Neurospora crassa (strain ATCC 24698 / 74-OR23-1A / CBS 708.71 / DSM 1257 / FGSC 987) protein is ATP-dependent RNA helicase dbp-9 (dbp-9).